Reading from the N-terminus, the 235-residue chain is Aspartate/glutamate leucyltransferase (235 aa).

The protein belongs to the R-transferase family. Bpt subfamily.

It is found in the cytoplasm. The enzyme catalyses N-terminal L-glutamyl-[protein] + L-leucyl-tRNA(Leu) = N-terminal L-leucyl-L-glutamyl-[protein] + tRNA(Leu) + H(+). It carries out the reaction N-terminal L-aspartyl-[protein] + L-leucyl-tRNA(Leu) = N-terminal L-leucyl-L-aspartyl-[protein] + tRNA(Leu) + H(+). In terms of biological role, functions in the N-end rule pathway of protein degradation where it conjugates Leu from its aminoacyl-tRNA to the N-termini of proteins containing an N-terminal aspartate or glutamate. The polypeptide is Aspartate/glutamate leucyltransferase (Pseudomonas fluorescens (strain ATCC BAA-477 / NRRL B-23932 / Pf-5)).